We begin with the raw amino-acid sequence, 33 residues long: Photosystem II reaction center protein Psb30 (33 aa).

Residues V5–L25 traverse the membrane as a helical segment.

This sequence belongs to the Psb30/Ycf12 family. As to quaternary structure, PSII is composed of 1 copy each of membrane proteins PsbA, PsbB, PsbC, PsbD, PsbE, PsbF, PsbH, PsbI, PsbJ, PsbK, PsbL, PsbM, PsbT, PsbX, PsbY, PsbZ, Psb30/Ycf12, peripheral proteins of the oxygen-evolving complex and a large number of cofactors. It forms dimeric complexes.

The protein localises to the plastid. It localises to the chloroplast thylakoid membrane. A core subunit of photosystem II (PSII), probably helps stabilize the reaction center. The sequence is that of Photosystem II reaction center protein Psb30 from Cycas taitungensis (Prince sago).